The chain runs to 408 residues: Peptidase T (408 aa).

H78 provides a ligand contact to Zn(2+). Residue D80 is part of the active site. D140 provides a ligand contact to Zn(2+). Catalysis depends on E173, which acts as the Proton acceptor. Positions 174, 196, and 379 each coordinate Zn(2+).

The protein belongs to the peptidase M20B family. Zn(2+) serves as cofactor.

The protein resides in the cytoplasm. The catalysed reaction is Release of the N-terminal residue from a tripeptide.. In terms of biological role, cleaves the N-terminal amino acid of tripeptides. This chain is Peptidase T, found in Escherichia coli (strain K12 / MC4100 / BW2952).